Reading from the N-terminus, the 304-residue chain is Homoserine kinase (304 aa).

An ATP-binding site is contributed by 90-100 (PLARGLGSSAS).

This sequence belongs to the GHMP kinase family. Homoserine kinase subfamily.

The protein resides in the cytoplasm. The enzyme catalyses L-homoserine + ATP = O-phospho-L-homoserine + ADP + H(+). The protein operates within amino-acid biosynthesis; L-threonine biosynthesis; L-threonine from L-aspartate: step 4/5. Functionally, catalyzes the ATP-dependent phosphorylation of L-homoserine to L-homoserine phosphate. This Staphylococcus aureus (strain bovine RF122 / ET3-1) protein is Homoserine kinase.